We begin with the raw amino-acid sequence, 150 residues long: Globin-1 (150 aa).

Residues 11–150 form the Globin domain; it reads PLSDAEKNKI…MICILLSSAY (140 aa). Residues His-74 and His-106 each coordinate heme b.

It belongs to the globin family. In terms of assembly, monomer.

This is Globin-1 from Mordacia mordax (Southern hemisphere lamprey).